A 536-amino-acid polypeptide reads, in one-letter code: CTP synthase (536 aa).

The amidoligase domain stretch occupies residues 1-267 (MTKYIFVTGG…DQIVCDHLKL (267 aa)). Serine 13 is a binding site for CTP. Residue serine 13 participates in UTP binding. An ATP-binding site is contributed by 14–19 (SIGKGI). Tyrosine 54 is an L-glutamine binding site. Aspartate 71 is an ATP binding site. 2 residues coordinate Mg(2+): aspartate 71 and glutamate 141. Residues 148 to 150 (DIE), 188 to 193 (KTKPTQ), and lysine 224 each bind CTP. UTP-binding positions include 188–193 (KTKPTQ) and lysine 224. The Glutamine amidotransferase type-1 domain maps to 292–535 (KIALVGKYVE…ITAAVENSQA (244 aa)). Glycine 354 is an L-glutamine binding site. Cysteine 381 (nucleophile; for glutamine hydrolysis) is an active-site residue. L-glutamine is bound by residues 382–385 (LGMQ), glutamate 405, and arginine 463. Active-site residues include histidine 508 and glutamate 510.

It belongs to the CTP synthase family. Homotetramer.

The enzyme catalyses UTP + L-glutamine + ATP + H2O = CTP + L-glutamate + ADP + phosphate + 2 H(+). The catalysed reaction is L-glutamine + H2O = L-glutamate + NH4(+). It carries out the reaction UTP + NH4(+) + ATP = CTP + ADP + phosphate + 2 H(+). Its pathway is pyrimidine metabolism; CTP biosynthesis via de novo pathway; CTP from UDP: step 2/2. Its activity is regulated as follows. Allosterically activated by GTP, when glutamine is the substrate; GTP has no effect on the reaction when ammonia is the substrate. The allosteric effector GTP functions by stabilizing the protein conformation that binds the tetrahedral intermediate(s) formed during glutamine hydrolysis. Inhibited by the product CTP, via allosteric rather than competitive inhibition. In terms of biological role, catalyzes the ATP-dependent amination of UTP to CTP with either L-glutamine or ammonia as the source of nitrogen. Regulates intracellular CTP levels through interactions with the four ribonucleotide triphosphates. In Streptococcus mutans serotype c (strain ATCC 700610 / UA159), this protein is CTP synthase.